Consider the following 268-residue polypeptide: Regulation of nuclear pre-mRNA domain-containing protein 1A (268 aa).

The region spanning 1-133 (MSAFSEAALE…QLRQALYGDR (133 aa)) is the CID domain.

This sequence belongs to the UPF0400 (RTT103) family. As to quaternary structure, may form a heterodimer with RPRD1B. Associates with the RNA polymerase II subunit POLR2A (via CTD phosphorylated at 'Ser-2' and 'Ser-7' of the heptad repeats).

It localises to the nucleus. Functionally, interacts with phosphorylated C-terminal heptapeptide repeat domain (CTD) of the largest RNA polymerase II subunit POLR2A, and participates in dephosphorylation of the CTD by RPAP2. May act as a negative regulator of cyclin-D1 (CCND1) and cyclin-E (CCNE1) in the cell cycle. The protein is Regulation of nuclear pre-mRNA domain-containing protein 1A (RPRD1A) of Gallus gallus (Chicken).